Consider the following 546-residue polypeptide: Chaperonin GroEL (546 aa).

ATP is bound by residues 30 to 33 (TLGP), Lys51, 87 to 91 (DGTTT), Gly415, and Asp495.

This sequence belongs to the chaperonin (HSP60) family. As to quaternary structure, forms a cylinder of 14 subunits composed of two heptameric rings stacked back-to-back. Interacts with the co-chaperonin GroES.

It localises to the cytoplasm. It carries out the reaction ATP + H2O + a folded polypeptide = ADP + phosphate + an unfolded polypeptide.. Together with its co-chaperonin GroES, plays an essential role in assisting protein folding. The GroEL-GroES system forms a nano-cage that allows encapsulation of the non-native substrate proteins and provides a physical environment optimized to promote and accelerate protein folding. The polypeptide is Chaperonin GroEL (Brucella melitensis biotype 2 (strain ATCC 23457)).